The sequence spans 564 residues: 5-aminolevulinate synthase, mitochondrial (564 aa).

A mitochondrion-targeting transit peptide spans 1–57 (MESITKVSMSVCPFVRSTSTQALRQLSQTSGALANQARQCPIAGNAIRAKEISIRSY). Substrate is bound by residues arginine 113, serine 226, and lysine 245. Residues serine 278, histidine 306, and threonine 350 each contribute to the pyridoxal 5'-phosphate site. Lysine 353 is a catalytic residue. Lysine 353 is modified (N6-(pyridoxal phosphate)lysine). Residues threonine 382 and threonine 383 each contribute to the pyridoxal 5'-phosphate site. Threonine 468 serves as a coordination point for substrate.

It belongs to the class-II pyridoxal-phosphate-dependent aminotransferase family. In terms of assembly, homodimer. It depends on pyridoxal 5'-phosphate as a cofactor.

It is found in the mitochondrion matrix. It catalyses the reaction succinyl-CoA + glycine + H(+) = 5-aminolevulinate + CO2 + CoA. It functions in the pathway porphyrin-containing compound metabolism; protoporphyrin-IX biosynthesis; 5-aminolevulinate from glycine: step 1/1. Its function is as follows. Catalyzes the synthesis of 5-aminolevulinate (ALA) from succinyl-CoA and glycine, the first and rate-limiting step in heme biosynthesis. This chain is 5-aminolevulinate synthase, mitochondrial (HEM1), found in Candida albicans (strain SC5314 / ATCC MYA-2876) (Yeast).